Consider the following 84-residue polypeptide: Small ribosomal subunit protein bS20 (84 aa).

The disordered stretch occupies residues 1 to 28 (MPNIKSAIKRVKTAETRNSRNASQRSAM).

It belongs to the bacterial ribosomal protein bS20 family.

In terms of biological role, binds directly to 16S ribosomal RNA. The protein is Small ribosomal subunit protein bS20 of Listeria monocytogenes serotype 4b (strain CLIP80459).